The primary structure comprises 529 residues: Alkaline phosphatase, germ cell type (529 aa).

An N-terminal signal peptide occupies residues 1–18 (MWGACLLLLGLSLQVCPS). Aspartate 60 lines the Mg(2+) pocket. 2 residues coordinate Zn(2+): aspartate 60 and serine 110. The active-site Phosphoserine intermediate is serine 110. A disulfide bridge links cysteine 139 with cysteine 201. N-linked (GlcNAc...) asparagine glycosylation occurs at asparagine 140. Residue serine 173 coordinates Mg(2+). Residue glutamate 234 coordinates Ca(2+). Asparagine 267 and asparagine 277 each carry an N-linked (GlcNAc...) asparagine glycan. Residues phenylalanine 287, glutamate 288, and aspartate 303 each coordinate Ca(2+). Glutamate 329 is a Mg(2+) binding site. Residues aspartate 334, histidine 338, aspartate 375, histidine 376, and histidine 450 each coordinate Zn(2+). An intrachain disulfide couples cysteine 485 to cysteine 492. Serine 502 is lipidated: GPI-anchor amidated serine. Positions 503 to 529 (AVSPGYMSTLLCLLAGKMLMLMAAAEP) are cleaved as a propeptide — removed in mature form.

Belongs to the alkaline phosphatase family. In terms of assembly, homodimer. Mg(2+) is required as a cofactor. The cofactor is Zn(2+). Requires Ca(2+) as cofactor. In terms of tissue distribution, embryo and testis.

Its subcellular location is the cell membrane. It catalyses the reaction a phosphate monoester + H2O = an alcohol + phosphate. Its activity is regulated as follows. Inhibited by L-leucine, EDTA and heat. Alkaline phosphatase that can hydrolyze various phosphate compounds. This Mus musculus (Mouse) protein is Alkaline phosphatase, germ cell type (Alpg).